The chain runs to 310 residues: p-hydroxybenzoic acid efflux pump subunit AaeA (310 aa).

The helical transmembrane segment at 12–32 threads the bilayer; it reads AITVILVILAFVAIFRAWVYY.

It belongs to the membrane fusion protein (MFP) (TC 8.A.1) family.

The protein resides in the cell inner membrane. Its function is as follows. Forms an efflux pump with AaeB. This is p-hydroxybenzoic acid efflux pump subunit AaeA from Klebsiella pneumoniae (strain 342).